A 209-amino-acid polypeptide reads, in one-letter code: D-aminoacyl-tRNA deacylase 1 (209 aa).

Residues Val4, Gln6, and Cys28 each contribute to the Mg(2+) site. Positions 139 to 140 (GP) match the Gly-cisPro motif, important for rejection of L-amino acids motif. A disordered region spans residues 142–209 (TIELESPAPG…EGDVSSEREP (68 aa)). 2 stretches are compositionally biased toward basic and acidic residues: residues 159–170 (QLSKLEKQQQRK) and 181–194 (SSKE…EDRS). A phosphoserine mark is found at Ser197, Ser204, and Ser205.

Belongs to the DTD family. Homodimer. Interacts with CDC45 and TOPBP1. Post-translationally, preferentially phosphorylated in cells arrested early in S phase. Phosphorylation in the C-terminus weakens the interaction with CDC45. As to expression, expressed in many adult and fetal tissues. Highest levels in testis, ovary, spleen and in adult and fetal brain.

The protein localises to the nucleus. The protein resides in the cytoplasm. The catalysed reaction is glycyl-tRNA(Ala) + H2O = tRNA(Ala) + glycine + H(+). It carries out the reaction a D-aminoacyl-tRNA + H2O = a tRNA + a D-alpha-amino acid + H(+). Possible ATPase involved in DNA replication, may facilitate loading of CDC45 onto pre-replication complexes. In terms of biological role, an aminoacyl-tRNA editing enzyme that deacylates mischarged D-aminoacyl-tRNAs. Also deacylates mischarged glycyl-tRNA(Ala), protecting cells against glycine mischarging by AlaRS. Acts via tRNA-based rather than protein-based catalysis; rejects L-amino acids rather than detecting D-amino acids in the active site. By recycling D-aminoacyl-tRNA to D-amino acids and free tRNA molecules, this enzyme counteracts the toxicity associated with the formation of D-aminoacyl-tRNA entities in vivo and helps enforce protein L-homochirality. The chain is D-aminoacyl-tRNA deacylase 1 (DTD1) from Homo sapiens (Human).